We begin with the raw amino-acid sequence, 437 residues long: UBX domain-containing protein 6 (437 aa).

Disordered regions lie at residues 1–45 and 89–109; these read MNSF…AQGG and ERRQ…QPDR. A compositionally biased stretch (basic residues) spans 7–18; it reads FLNKKRVQNHFK. Residues 179-251 enclose the PUB domain; that stretch reads ETAIETICKY…VFTKPSDVHL (73 aa). In terms of domain architecture, UBX spans 332 to 409; sequence YRYKYTLIRV…SLAPAALLHV (78 aa).

In terms of assembly, interacts with cdc-48.1 (via N-terminus) and cdc-48.2 (via N-terminus). Expressed in the pharynx and some head neurons.

Its function is as follows. Probably acts as an adapter for ATPase cdc-48.1 and/or cdc-48.2, conferring substrate specificity. Involved in the lysosomal clearance of cellular material in diet restricted conditions. The sequence is that of UBX domain-containing protein 6 from Caenorhabditis elegans.